Here is a 347-residue protein sequence, read N- to C-terminus: Eukaryotic translation initiation factor 3 subunit I (347 aa).

WD repeat units follow at residues 8 to 47 (GHERPLTQVKYNKEGDLVFSCSKDSVASVWYSINGERLGT), 50 to 89 (GHTGTIWSIDVDPFTESCVTGSADYSIKVWKVQTGTVIHT), 91 to 135 (TAPV…VTKE), 151 to 190 (ENHKGVTVAGWSAEGKYIIACHKDGKVSKYNAKTGEFITS), 193 to 232 (LHTQTIGDIQFSPDRTYFITSSRDSMAYILDVESMEQLKS), and 290 to 329 (GHFGPLNYVAVNPQGTSYTSGGEDGFARIHHFEKSYFDFK).

It belongs to the eIF-3 subunit I family. Component of the eukaryotic translation initiation factor 3 (eIF-3) complex.

Its subcellular location is the cytoplasm. Its function is as follows. Component of the eukaryotic translation initiation factor 3 (eIF-3) complex, which is involved in protein synthesis of a specialized repertoire of mRNAs and, together with other initiation factors, stimulates binding of mRNA and methionyl-tRNAi to the 40S ribosome. The eIF-3 complex specifically targets and initiates translation of a subset of mRNAs involved in cell proliferation. The sequence is that of Eukaryotic translation initiation factor 3 subunit I from Vanderwaltozyma polyspora (strain ATCC 22028 / DSM 70294 / BCRC 21397 / CBS 2163 / NBRC 10782 / NRRL Y-8283 / UCD 57-17) (Kluyveromyces polysporus).